Here is a 304-residue protein sequence, read N- to C-terminus: 4-diphosphocytidyl-2-C-methyl-D-erythritol kinase (304 aa).

Lys18 is an active-site residue. 103 to 113 (PVAAGIGGGSA) lines the ATP pocket. Asp145 is a catalytic residue.

It belongs to the GHMP kinase family. IspE subfamily.

The catalysed reaction is 4-CDP-2-C-methyl-D-erythritol + ATP = 4-CDP-2-C-methyl-D-erythritol 2-phosphate + ADP + H(+). Its pathway is isoprenoid biosynthesis; isopentenyl diphosphate biosynthesis via DXP pathway; isopentenyl diphosphate from 1-deoxy-D-xylulose 5-phosphate: step 3/6. In terms of biological role, catalyzes the phosphorylation of the position 2 hydroxy group of 4-diphosphocytidyl-2C-methyl-D-erythritol. The polypeptide is 4-diphosphocytidyl-2-C-methyl-D-erythritol kinase (Rhodospirillum rubrum (strain ATCC 11170 / ATH 1.1.1 / DSM 467 / LMG 4362 / NCIMB 8255 / S1)).